The primary structure comprises 131 residues: Small ribosomal subunit protein uS8 (131 aa).

This sequence belongs to the universal ribosomal protein uS8 family. Part of the 30S ribosomal subunit. Contacts proteins S5 and S12.

Functionally, one of the primary rRNA binding proteins, it binds directly to 16S rRNA central domain where it helps coordinate assembly of the platform of the 30S subunit. The sequence is that of Small ribosomal subunit protein uS8 from Sulfurovum sp. (strain NBC37-1).